Here is a 502-residue protein sequence, read N- to C-terminus: MSEQEVKELDLNGEMLVRREKLAALRAKGNAFPNKFRRDALAQDLHNQYDAEDGEILKEKGIEVQVAGRIMTRRAMGKATFITIQDMSGKIQLYVARDNLPEGVYKDDVGTWDLGDIVGIKGTLFKTKTDELTVKTTEVQLLTKALRPLPDKFHGLTDQEVRYRQRYLDLISNEESRRTFIIRSKVVAGIREYFISKGFMEVETPMLQVIPGGASARPFVTHHNALDVDMYLRIAPELYLKRLVVGGFERVFELNRNFRNEGVSVRHNPEFTMLEYYQAYADYHDLMDNTEELLRKLAIDILGTTIVKYGDLEFDFGKPFERITLHDATIKYGADKGIVKEDLYDFDRAKATAERLGIEVQKSWGLGSIVNAIFEEVAEHHLIQPTFLNGSPAEISPLARRNDENPEVTDRFELFIGGREIGNGFSELNDAEDQNERFDAQVAAKEAGDDEAMFKDEDFVVALEHGLPPTAGEGLGIDRLAMLYANAPSIRDVILFPAMRQK.

Positions 413 and 420 each coordinate Mg(2+).

It belongs to the class-II aminoacyl-tRNA synthetase family. In terms of assembly, homodimer. Mg(2+) serves as cofactor.

The protein resides in the cytoplasm. The enzyme catalyses tRNA(Lys) + L-lysine + ATP = L-lysyl-tRNA(Lys) + AMP + diphosphate. This is Lysine--tRNA ligase (lysS) from Haemophilus influenzae (strain ATCC 51907 / DSM 11121 / KW20 / Rd).